Here is a 415-residue protein sequence, read N- to C-terminus: Adipocyte plasma membrane-associated protein (415 aa).

The interval 1–30 is disordered; the sequence is MNEAEGLRQRRPLRPQVITEDSPAQEAKEG. At 1–39 the chain is on the cytoplasmic side; it reads MNEAEGLRQRRPLRPQVITEDSPAQEAKEGSAYSSKVFR. Residues 40–60 form a helical membrane-spanning segment; that stretch reads VTFLTLAASLAVPLLGATVLL. The Extracellular segment spans residues 61–412; it reads DCPIDPQPIS…RSPFICRLNL (352 aa). An N-linked (GlcNAc...) asparagine glycan is attached at N159.

This sequence belongs to the strictosidine synthase family.

It is found in the membrane. This chain is Adipocyte plasma membrane-associated protein (APMAP), found in Gallus gallus (Chicken).